The sequence spans 563 residues: Sperm-tail PG-rich repeat-containing protein 2 (563 aa).

3 STPGR repeats span residues 21-34 (VGPGTYQVPFPKQQ), 63-73 (PGPAHYNVSQA), and 97-107 (GPGPASYDCPY). The segment at 131–163 (IPSIPSSGKSHGYHLNEDDTIMRRTPPSSDKTM) is disordered. STPGR repeat units follow at residues 200 to 219 (GPGPGHYDIIQKRKLRYENI), 250 to 263 (PGPGKYNIKSQFDH), 292 to 321 (TPAPGTYNETRTAFKVPKKRSGLFSPFGQR), 334 to 353 (LPGPGFYDISTNIVKAQVKK), 423 to 438 (LPAPGCYDVQKSYDMS), 473 to 483 (GPGPATYNPIL), and 507 to 518 (SPGPTTYELSPF).

The sequence is that of Sperm-tail PG-rich repeat-containing protein 2 (Stpg2) from Rattus norvegicus (Rat).